Consider the following 94-residue polypeptide: Pyrimidine/purine nucleoside phosphorylase (94 aa).

The protein belongs to the nucleoside phosphorylase PpnP family.

It carries out the reaction a purine D-ribonucleoside + phosphate = a purine nucleobase + alpha-D-ribose 1-phosphate. The catalysed reaction is adenosine + phosphate = alpha-D-ribose 1-phosphate + adenine. The enzyme catalyses cytidine + phosphate = cytosine + alpha-D-ribose 1-phosphate. It catalyses the reaction guanosine + phosphate = alpha-D-ribose 1-phosphate + guanine. It carries out the reaction inosine + phosphate = alpha-D-ribose 1-phosphate + hypoxanthine. The catalysed reaction is thymidine + phosphate = 2-deoxy-alpha-D-ribose 1-phosphate + thymine. The enzyme catalyses uridine + phosphate = alpha-D-ribose 1-phosphate + uracil. It catalyses the reaction xanthosine + phosphate = alpha-D-ribose 1-phosphate + xanthine. Catalyzes the phosphorolysis of diverse nucleosides, yielding D-ribose 1-phosphate and the respective free bases. Can use uridine, adenosine, guanosine, cytidine, thymidine, inosine and xanthosine as substrates. Also catalyzes the reverse reactions. The protein is Pyrimidine/purine nucleoside phosphorylase of Aeromonas hydrophila subsp. hydrophila (strain ATCC 7966 / DSM 30187 / BCRC 13018 / CCUG 14551 / JCM 1027 / KCTC 2358 / NCIMB 9240 / NCTC 8049).